Consider the following 326-residue polypeptide: Lipopolysaccharide heptosyltransferase 1 (326 aa).

T187, T188, K192, E222, and M242 together coordinate ADP. 9 residues coordinate ADP-L-glycero-beta-D-manno-heptose: T187, T188, K192, E222, M242, D261, T262, G263, and H266. Residues T262 and G263 each contribute to the ADP site.

This sequence belongs to the glycosyltransferase 9 family. Monomer.

It localises to the cell inner membrane. It catalyses the reaction an alpha-Kdo-(2-&gt;4)-alpha-Kdo-(2-&gt;6)-lipid A + ADP-L-glycero-beta-D-manno-heptose = an L-alpha-D-Hep-(1-&gt;5)-[alpha-Kdo-(2-&gt;4)]-alpha-Kdo-(2-&gt;6)-lipid A + ADP + H(+). The catalysed reaction is alpha-Kdo-(2-&gt;4)-alpha-Kdo-(2-&gt;6)-lipid A (E. coli) + ADP-L-glycero-beta-D-manno-heptose = L-alpha-D-Hep-(1-&gt;5)-[alpha-Kdo-(2-&gt;4)]-alpha-Kdo-(2-&gt;6)-lipid A (E. coli) + ADP + H(+). It functions in the pathway bacterial outer membrane biogenesis; LPS core biosynthesis. Its activity is regulated as follows. Inhibited by ADP-L-glycero-beta-D-gluco-2-deoxy-2-fluoro-heptose (ADP-2F-heptose), a non-cleavable analog of the substrate ADP-L-glycero-beta-D-manno-heptose. Glycosyltransferase involved in the biosynthesis of the core oligosaccharide region of lipopolysaccharide (LPS). Catalyzes the addition of the first heptose unit to one 3-deoxy-D-manno-octulosonic acid (Kdo) residue of the Kdo2-lipid A module. The protein is Lipopolysaccharide heptosyltransferase 1 of Escherichia coli O18:K1:H7 (strain RS218 / NMEC).